The following is a 28-amino-acid chain: Phospholipase A2 (28 aa).

Residue G28 participates in Ca(2+) binding.

The cofactor is Ca(2+). In terms of tissue distribution, expressed by the venom gland.

The protein resides in the secreted. It catalyses the reaction a 1,2-diacyl-sn-glycero-3-phosphocholine + H2O = a 1-acyl-sn-glycero-3-phosphocholine + a fatty acid + H(+). Functionally, PLA2 catalyzes the calcium-dependent hydrolysis of the 2-acyl groups in 3-sn-phosphoglycerides. The polypeptide is Phospholipase A2 (Scolopendra dehaani (Thai centipede)).